A 284-amino-acid chain; its full sequence is Phosphoribosylaminoimidazole-succinocarboxamide synthase (284 aa).

Belongs to the SAICAR synthetase family.

The enzyme catalyses 5-amino-1-(5-phospho-D-ribosyl)imidazole-4-carboxylate + L-aspartate + ATP = (2S)-2-[5-amino-1-(5-phospho-beta-D-ribosyl)imidazole-4-carboxamido]succinate + ADP + phosphate + 2 H(+). The protein operates within purine metabolism; IMP biosynthesis via de novo pathway; 5-amino-1-(5-phospho-D-ribosyl)imidazole-4-carboxamide from 5-amino-1-(5-phospho-D-ribosyl)imidazole-4-carboxylate: step 1/2. In Chromobacterium violaceum (strain ATCC 12472 / DSM 30191 / JCM 1249 / CCUG 213 / NBRC 12614 / NCIMB 9131 / NCTC 9757 / MK), this protein is Phosphoribosylaminoimidazole-succinocarboxamide synthase.